We begin with the raw amino-acid sequence, 531 residues long: MTDTIFDYVIVGGGTAGSVLANRLSARPENRVLLIEAGIDTPENNIPPEIHDGLRPWLPRLSGDKFFWPNLTIHRAAEHPGITREPQFYEQGRLLGGGSSVNMVVSNRGLPRDYDEWQALGADGWDWQGVLPYFIKTERDADYGDDPLHGNAGPIPIGRVDSRHWSDFTVAATQALEAAGLPNIHDQNARFDDGYFPPAFTLKGEERFSAARGYLDASVRVRPNLSLWTESRVLKLLTTGNAITGVSVLRGRETLQVQAREVILTAGALQSPAILLRTGIGPAADLHALGIPVLADRPGVGRNLWEHSSIGVVAPLTEQARADASTGKAGSRHQLGIRASSGVDPATPSDLFLHIGADPVSGLASAVFWVNKPSSTGWLKLKDADPFSYPDVDFNLLSDPRDLGRLKAGLRLITHYFAAPSLAKYGLALALSRFAAPQPGGPLLNDLLQDEAALERYLRTNVGGVWHASGTARIGRADDSQAVVDKAGRVYGVTGLRVADASIMPTVPTANTNLPTLMLAEKIADAILTQA.

Residues 15–16 (TA), 36–37 (EA), Trp-68, Leu-94, Gly-98, 102–105 (NMVV), Val-233, and Trp-466 contribute to the FAD site. His-467 functions as the Proton acceptor in the catalytic mechanism. Residues Ala-501 and 512-513 (TN) each bind FAD.

It belongs to the GMC oxidoreductase family. Monomer. It depends on FAD as a cofactor.

It catalyses the reaction 5-hydroxymethylfurfural + 3 O2 + 2 H2O = 2,5-dicarboxyfuran + 3 H2O2 + 2 H(+). The catalysed reaction is benzylthiol + O2 = benzothialdehyde + H2O2. In terms of biological role, involved in the degradation and detoxification of 5-(hydroxymethyl)furfural (HMF) by mediating its oxidation to furan-2,5-dicarboxylate (FDCA), a biobased platform chemical for the production of polymers. Active with a wide range of aromatic and aliphatic primary alcohols and aldehydes: acts on alcohol groups and requires the spontaneous hydration of aldehyde groups for their oxidation. To a lesser extent, is also able to catalyze the oxidation of thiols that are structurally similar to its alcohol substrates, yielding the corresponding thiocarbonyls. The chain is 5-(hydroxymethyl)furfural oxidase from Methylovorus sp. (strain MP688).